Here is a 278-residue protein sequence, read N- to C-terminus: Glutamyl-Q tRNA(Asp) synthetase (278 aa).

L-glutamate is bound by residues 4 to 8 (RFAPS) and Glu40. The 'HIGH' region motif lies at 7 to 17 (PSPTGPLHLGH). Cys96, Cys98, Tyr123, and Cys127 together coordinate Zn(2+). L-glutamate-binding residues include Tyr193 and Arg211. The short motif at 249-253 (RLAKR) is the 'KMSKS' region element. ATP is bound at residue Lys252.

It belongs to the class-I aminoacyl-tRNA synthetase family. GluQ subfamily. Zn(2+) serves as cofactor.

Catalyzes the tRNA-independent activation of glutamate in presence of ATP and the subsequent transfer of glutamate onto a tRNA(Asp). Glutamate is transferred on the 2-amino-5-(4,5-dihydroxy-2-cyclopenten-1-yl) moiety of the queuosine in the wobble position of the QUC anticodon. The protein is Glutamyl-Q tRNA(Asp) synthetase (gluQ) of Rhodobacter capsulatus (strain ATCC BAA-309 / NBRC 16581 / SB1003).